The sequence spans 105 residues: Large ribosomal subunit protein bL21 (105 aa).

This sequence belongs to the bacterial ribosomal protein bL21 family. As to quaternary structure, part of the 50S ribosomal subunit. Contacts protein L20.

Its function is as follows. This protein binds to 23S rRNA in the presence of protein L20. The protein is Large ribosomal subunit protein bL21 of Rickettsia prowazekii (strain Madrid E).